The following is a 255-amino-acid chain: Hydroxyethylthiazole kinase (255 aa).

Met38 provides a ligand contact to substrate. ATP contacts are provided by Arg114 and Thr160. Gly187 contributes to the substrate binding site.

The protein belongs to the Thz kinase family. Requires Mg(2+) as cofactor.

The enzyme catalyses 5-(2-hydroxyethyl)-4-methylthiazole + ATP = 4-methyl-5-(2-phosphooxyethyl)-thiazole + ADP + H(+). It functions in the pathway cofactor biosynthesis; thiamine diphosphate biosynthesis; 4-methyl-5-(2-phosphoethyl)-thiazole from 5-(2-hydroxyethyl)-4-methylthiazole: step 1/1. In terms of biological role, catalyzes the phosphorylation of the hydroxyl group of 4-methyl-5-beta-hydroxyethylthiazole (THZ). The chain is Hydroxyethylthiazole kinase from Lysinibacillus sphaericus (strain C3-41).